A 905-amino-acid polypeptide reads, in one-letter code: Coatomer subunit beta' (905 aa).

WD repeat units follow at residues Ala13–Thr52, Val55–Met94, Ala97–Gln136, Gly140–Thr180, Gly183–Thr224, Gly227–Thr266, Ser350–Phe388, and Ser390–Lys425. Position 627 is an N6-acetyllysine (Lys627). The stretch at Ile746 to Lys783 is one WD 9 repeat. The tract at residues Glu837–Asp905 is disordered. The residue at position 859 (Ser859) is a Phosphoserine. Residues Gln867–Ile891 adopt a coiled-coil conformation. Over residues Glu878 to Asp905 the composition is skewed to acidic residues.

It belongs to the WD repeat COPB2 family. Oligomeric complex that consists of at least the alpha, beta, beta', gamma, delta, epsilon and zeta subunits. Probably interacts with PEX11A. Interacts with JAGN1. Interacts with SCYL1.

The protein localises to the cytoplasm. It localises to the cytosol. The protein resides in the golgi apparatus membrane. Its subcellular location is the cytoplasmic vesicle. It is found in the COPI-coated vesicle membrane. Functionally, the coatomer is a cytosolic protein complex that binds to dilysine motifs and reversibly associates with Golgi non-clathrin-coated vesicles, which further mediate biosynthetic protein transport from the ER, via the Golgi up to the trans Golgi network. Coatomer complex is required for budding from Golgi membranes, and is essential for the retrograde Golgi-to-ER transport of dilysine-tagged proteins. In mammals, the coatomer can only be recruited by membranes associated to ADP-ribosylation factors (ARFs), which are small GTP-binding proteins; the complex also influences the Golgi structural integrity, as well as the processing, activity, and endocytic recycling of LDL receptors. Its function is as follows. This coatomer complex protein, essential for Golgi budding and vesicular trafficking, is a selective binding protein (RACK) for protein kinase C, epsilon type. It binds to Golgi membranes in a GTP-dependent manner. This chain is Coatomer subunit beta' (Copb2), found in Rattus norvegicus (Rat).